A 333-amino-acid chain; its full sequence is Malate dehydrogenase (333 aa).

NAD(+)-binding positions include 10-15 (GGGQIG) and aspartate 34. Residues arginine 83 and arginine 89 each coordinate substrate. NAD(+) is bound by residues asparagine 96 and 119–121 (ITN). Substrate contacts are provided by asparagine 121 and arginine 152. Histidine 176 acts as the Proton acceptor in catalysis.

Belongs to the LDH/MDH superfamily. MDH type 3 family.

It catalyses the reaction (S)-malate + NAD(+) = oxaloacetate + NADH + H(+). Its function is as follows. Catalyzes the reversible oxidation of malate to oxaloacetate. This chain is Malate dehydrogenase, found in Parvibaculum lavamentivorans (strain DS-1 / DSM 13023 / NCIMB 13966).